A 130-amino-acid chain; its full sequence is Small ribosomal subunit protein uS11 (130 aa).

Residues 108 to 130 (IEDVTPIPHDGTGRPGGKRGRRV) form a disordered region.

It belongs to the universal ribosomal protein uS11 family. Part of the 30S ribosomal subunit.

Functionally, located on the platform of the 30S subunit. The chain is Small ribosomal subunit protein uS11 from Methanothermobacter thermautotrophicus (strain ATCC 29096 / DSM 1053 / JCM 10044 / NBRC 100330 / Delta H) (Methanobacterium thermoautotrophicum).